The sequence spans 81 residues: Small ribosomal subunit protein uS15 (81 aa).

It belongs to the universal ribosomal protein uS15 family. As to quaternary structure, part of the 30S ribosomal subunit. Forms a bridge to the 50S subunit in the 70S ribosome, contacting the 23S rRNA.

One of the primary rRNA binding proteins, it binds directly to 16S rRNA where it helps nucleate assembly of the platform of the 30S subunit by binding and bridging several RNA helices of the 16S rRNA. Functionally, forms an intersubunit bridge (bridge B4) with the 23S rRNA of the 50S subunit in the ribosome. The polypeptide is Small ribosomal subunit protein uS15 (Mesomycoplasma hyorhinis (Mycoplasma hyorhinis)).